A 416-amino-acid polypeptide reads, in one-letter code: Multifunctional CCA protein (416 aa).

Positions 8 and 11 each coordinate ATP. The CTP site is built by Gly-8 and Arg-11. Residues Asp-21 and Asp-23 each coordinate Mg(2+). ATP contacts are provided by Arg-91, Arg-138, and Arg-141. The CTP site is built by Arg-91, Arg-138, and Arg-141. The HD domain maps to 229-331 (TGLHQELVSD…YELLQRCDAF (103 aa)).

It belongs to the tRNA nucleotidyltransferase/poly(A) polymerase family. Bacterial CCA-adding enzyme type 1 subfamily. Monomer. Can also form homodimers and oligomers. It depends on Mg(2+) as a cofactor. Ni(2+) serves as cofactor.

It catalyses the reaction a tRNA precursor + 2 CTP + ATP = a tRNA with a 3' CCA end + 3 diphosphate. The enzyme catalyses a tRNA with a 3' CCA end + 2 CTP + ATP = a tRNA with a 3' CCACCA end + 3 diphosphate. Functionally, catalyzes the addition and repair of the essential 3'-terminal CCA sequence in tRNAs without using a nucleic acid template. Adds these three nucleotides in the order of C, C, and A to the tRNA nucleotide-73, using CTP and ATP as substrates and producing inorganic pyrophosphate. tRNA 3'-terminal CCA addition is required both for tRNA processing and repair. Also involved in tRNA surveillance by mediating tandem CCA addition to generate a CCACCA at the 3' terminus of unstable tRNAs. While stable tRNAs receive only 3'-terminal CCA, unstable tRNAs are marked with CCACCA and rapidly degraded. The polypeptide is Multifunctional CCA protein (Xylella fastidiosa (strain M23)).